Consider the following 91-residue polypeptide: Probable translocation protein y4yM (91 aa).

A run of 2 helical transmembrane segments spans residues 15–35 (VVFM…GLTI) and 55–75 (LLVV…PLIE).

The protein belongs to the FliQ/MopD/SpaQ family.

It localises to the cell membrane. Could be involved in the secretion of an unknown factor. This is Probable translocation protein y4yM from Sinorhizobium fredii (strain NBRC 101917 / NGR234).